We begin with the raw amino-acid sequence, 709 residues long: Probable lanosterol 14-alpha demethylase (709 aa).

Residue cysteine 425 participates in heme binding.

This sequence belongs to the cytochrome P450 family. Heme is required as a cofactor.

The protein resides in the membrane. It carries out the reaction a 14alpha-methyl steroid + 3 reduced [NADPH--hemoprotein reductase] + 3 O2 = a Delta(14) steroid + formate + 3 oxidized [NADPH--hemoprotein reductase] + 4 H2O + 4 H(+). Its pathway is steroid biosynthesis; zymosterol biosynthesis; zymosterol from lanosterol: step 1/6. In terms of biological role, catalyzes the 14-alpha demethylation of obtusifoliol to 4 alpha-methyl-5 alpha-ergosta-8,14,24(28)-trien-3 beta-ol. In Acanthamoeba polyphaga (Amoeba), this protein is Probable lanosterol 14-alpha demethylase.